A 351-amino-acid chain; its full sequence is UDP-3-O-acylglucosamine N-acyltransferase (351 aa).

His-240 acts as the Proton acceptor in catalysis.

Belongs to the transferase hexapeptide repeat family. LpxD subfamily. In terms of assembly, homotrimer.

The enzyme catalyses a UDP-3-O-[(3R)-3-hydroxyacyl]-alpha-D-glucosamine + a (3R)-hydroxyacyl-[ACP] = a UDP-2-N,3-O-bis[(3R)-3-hydroxyacyl]-alpha-D-glucosamine + holo-[ACP] + H(+). Its pathway is bacterial outer membrane biogenesis; LPS lipid A biosynthesis. Functionally, catalyzes the N-acylation of UDP-3-O-acylglucosamine using 3-hydroxyacyl-ACP as the acyl donor. Is involved in the biosynthesis of lipid A, a phosphorylated glycolipid that anchors the lipopolysaccharide to the outer membrane of the cell. The sequence is that of UDP-3-O-acylglucosamine N-acyltransferase from Pseudomonas putida (strain ATCC 47054 / DSM 6125 / CFBP 8728 / NCIMB 11950 / KT2440).